The following is a 196-amino-acid chain: Putative NADH dehydrogenase/NAD(P)H nitroreductase SCO5049 (196 aa).

This sequence belongs to the nitroreductase family. HadB/RutE subfamily. Requires FMN as cofactor.

This chain is Putative NADH dehydrogenase/NAD(P)H nitroreductase SCO5049, found in Streptomyces coelicolor (strain ATCC BAA-471 / A3(2) / M145).